Here is a 376-residue protein sequence, read N- to C-terminus: Probable ribonucleoside-diphosphate reductase small subunit 048L (376 aa).

3 residues coordinate Fe cation: aspartate 110, glutamate 140, and histidine 143. The active site involves tyrosine 147. 3 residues coordinate Fe cation: glutamate 217, glutamate 251, and histidine 254.

The protein belongs to the ribonucleoside diphosphate reductase small chain family. Heterotetramer composed of a homodimer of the large subunit (R1) and a homodimer of the small subunit (R2). Larger multisubunit protein complex are also active, composed of (R1)n(R2)n. Fe cation serves as cofactor.

The catalysed reaction is a 2'-deoxyribonucleoside 5'-diphosphate + [thioredoxin]-disulfide + H2O = a ribonucleoside 5'-diphosphate + [thioredoxin]-dithiol. Functionally, ribonucleoside-diphosphate reductase holoenzyme provides the precursors necessary for viral DNA synthesis. Allows virus growth in non-dividing cells. Catalyzes the biosynthesis of deoxyribonucleotides from the corresponding ribonucleotides. This chain is Probable ribonucleoside-diphosphate reductase small subunit 048L, found in Invertebrate iridescent virus 3 (IIV-3).